We begin with the raw amino-acid sequence, 238 residues long: Purine nucleoside phosphorylase DeoD-type (238 aa).

H4 contacts a purine D-ribonucleoside. Residues G20, R24, R43, and R87–S90 contribute to the phosphate site. A purine D-ribonucleoside contacts are provided by residues E179–E181 and S203–D204. D204 (proton donor) is an active-site residue.

It belongs to the PNP/UDP phosphorylase family. As to quaternary structure, homohexamer; trimer of homodimers.

It catalyses the reaction a purine D-ribonucleoside + phosphate = a purine nucleobase + alpha-D-ribose 1-phosphate. It carries out the reaction a purine 2'-deoxy-D-ribonucleoside + phosphate = a purine nucleobase + 2-deoxy-alpha-D-ribose 1-phosphate. Functionally, catalyzes the reversible phosphorolytic breakdown of the N-glycosidic bond in the beta-(deoxy)ribonucleoside molecules, with the formation of the corresponding free purine bases and pentose-1-phosphate. This chain is Purine nucleoside phosphorylase DeoD-type, found in Actinobacillus succinogenes (strain ATCC 55618 / DSM 22257 / CCUG 43843 / 130Z).